A 293-amino-acid polypeptide reads, in one-letter code: MNSQLVNPPHAFNYIESQRDEYQLSHDLTEIILQFPSTAAQLTARLSRSCMKIDHCVIEYRQQVPINATGSVIVEIHDKRMTDNESLQASWTFPLRCNIDLHYFSASFFSLKDPIPWKLYYRVSDTNVHQRTHFAKFKGKLKLSTAKHSVDIPFRAPTVKILSKQFTDKDVDFSHVDYGRWERKPIRCASMSRVGLRGPIEIRPGESWASRSTIGVGQSEGESEIENELHTYRDLQRLGASVLDPGESASIVGANMAQSNITMSVAQLNELVRTTVQECIKSNCNSSQPKNFK.

This sequence belongs to the begomovirus movement protein BC1 family. As to quaternary structure, binds to dimeric supercoiled plasmid DNA. In terms of processing, phosphorylated.

The protein localises to the host cell membrane. Its subcellular location is the host microsome membrane. The protein resides in the host endoplasmic reticulum membrane. Functionally, transports viral genome to neighboring plant cells directly through plasmosdesmata, without any budding. The movement protein allows efficient cell to cell propagation, by bypassing the host cell wall barrier. Begomovirus genome is shuttled out of nucleus by Nuclear shuttle protein (NSP) and the movement protein transports the DNA-NSP complex to cell plasmodesmata and facilitates further movement across the cell wall. The sequence is that of Movement protein BC1 from Potato yellow mosaic virus (isolate Venezuela) (PYMV).